The following is a 258-amino-acid chain: Short-chain dehydrogenase chyC (258 aa).

Residues R37, D55, N81, Y154, K158, V185, and T187 each contribute to the NADP(+) site. The active-site Proton donor is the Y154. K158 functions as the Lowers pKa of active site Tyr in the catalytic mechanism.

The protein belongs to the short-chain dehydrogenases/reductases (SDR) family.

Functionally, short-chain dehydrogenase; part of the gene cluster that mediates the biosynthesis of the yellow pigment chrysogine. the NRPS chyA mediates the condensation of anthranilic acid and alanine into the intermediate 2-(2-aminopropanamido)benzoic acid. The remainder of the pathway is highly branched yielding at least 13 chrysogine-related compounds. The malonyl transferase chyE converts 2-(2-aminopropanamido)benzoic acid and 2-(2-aminopropanamido)benzamidine into 2-(2-(2-carboxyacetamido)propanamido)benzoic acid and 3-((1-((2-carbamoylphenyl)amino)-1-oxopropan-2-yl)amino)-3-oxopropanoic acid, respectively. ChyD is an amidase, being responsible for the amidation of the carboxylic acid moiety of 2-(2-aminopropanamido)benzoic acid, 2-(2-(2-carboxyacetamido)propanamido)benzoic acid and 2-(2-((4-amino-1-carboxy-4-oxobutyl)amino)propanamido)benzoic acid. ChyC is involved in the same reactions as ChyD, but plays a more minor role in the amidation reactions compared to chyD. The oxidoreductases chyH and chyM are involved in oxidation reactions that form N-pyruvoylanthranilamide from 2-(2-aminopropanamido)benzamidine and (1-((2-carbamoylphenyl)amino)-1-oxopropan-2-yl)glutamine, respectively. N-pyruvoylanthranilamide is further converted via two further branches in the pathway, yielding chrysogine and additional chrysogine-related coumpounds. Chrysogine is likely formed by a spontaneous ring closure from N-pyruvoylanthranilamide. The protein is Short-chain dehydrogenase chyC of Penicillium rubens (strain ATCC 28089 / DSM 1075 / NRRL 1951 / Wisconsin 54-1255) (Penicillium chrysogenum).